Consider the following 96-residue polypeptide: Protein RnfH (96 aa).

This sequence belongs to the UPF0125 (RnfH) family.

The protein is Protein RnfH of Pectobacterium carotovorum subsp. carotovorum (strain PC1).